A 41-amino-acid polypeptide reads, in one-letter code: Trypsin inhibitor (41 aa).

Cystine bridges form between cysteine 15–cysteine 26, cysteine 17–cysteine 24, and cysteine 29–cysteine 37.

Its function is as follows. Has two active sites that simultaneously bind and inhibit trypsin. In Trichosanthes kirilowii (Chinese snake gourd), this protein is Trypsin inhibitor.